A 207-amino-acid chain; its full sequence is Antitermination protein Q (207 aa).

A disordered region spans residues 1-28; that stretch reads MRLESVAKFHSPKSPMMSDSPRATASDS. 4 residues coordinate Zn(2+): Cys-118, Cys-121, Cys-144, and Cys-147. Residues 118–147 fold into a zinc finger; it reads CRNCHGTGRAVDIAKTEQWGRVVEKECGRC. The DNA-binding element occupies 171–192; the sequence is LTQPTWSRTVKPLYDALVVQCH.

This sequence belongs to the phage antitermination Q type 2 family. As to quaternary structure, interacts with host RPOB (via flap domain); this interaction renders host RNAP resistant to transcription pausing and allows it to read through termination signals. Interacts with host RNA polymerase sigma factor RPOD (via domain-4). Interacts with host NusA (via N-terminus and AR2 domain); this interaction releases the autoinhibition of NusA.

In terms of biological role, mediates the switch from middle to viral late gene expression by associating with host RNA polymerase (RNAP) so that the latter can read without pausing and through transcription terminators preceding late genes. Competes with host factor sigma 70 for binding to RPOB, the beta-subunit of host RNAP. To join the elongation complex, binds a specific DNA Q-binding element (QBE) and interacts with RNAP that is paused during early elongation. Participates in the lysis-lysogeny decision by activating the expression of the late lytic genes. This Salmonella typhimurium protein is Antitermination protein Q (23).